Reading from the N-terminus, the 454-residue chain is CCA-adding enzyme (454 aa).

Residues serine 59 and arginine 62 each coordinate ATP. Residues serine 59 and arginine 62 each contribute to the CTP site. Mg(2+) is bound by residues aspartate 71, aspartate 73, and aspartate 125. 3 residues coordinate ATP: histidine 148, lysine 167, and tyrosine 176. Positions 148, 167, and 176 each coordinate CTP.

This sequence belongs to the tRNA nucleotidyltransferase/poly(A) polymerase family. Archaeal CCA-adding enzyme subfamily. Homodimer. Mg(2+) serves as cofactor.

It catalyses the reaction a tRNA precursor + 2 CTP + ATP = a tRNA with a 3' CCA end + 3 diphosphate. The catalysed reaction is a tRNA with a 3' CCA end + 2 CTP + ATP = a tRNA with a 3' CCACCA end + 3 diphosphate. Functionally, catalyzes the addition and repair of the essential 3'-terminal CCA sequence in tRNAs without using a nucleic acid template. Adds these three nucleotides in the order of C, C, and A to the tRNA nucleotide-73, using CTP and ATP as substrates and producing inorganic pyrophosphate. tRNA 3'-terminal CCA addition is required both for tRNA processing and repair. Also involved in tRNA surveillance by mediating tandem CCA addition to generate a CCACCA at the 3' terminus of unstable tRNAs. While stable tRNAs receive only 3'-terminal CCA, unstable tRNAs are marked with CCACCA and rapidly degraded. The polypeptide is CCA-adding enzyme (Methanosarcina mazei (strain ATCC BAA-159 / DSM 3647 / Goe1 / Go1 / JCM 11833 / OCM 88) (Methanosarcina frisia)).